The sequence spans 410 residues: Na(+)-translocating NADH-quinone reductase subunit B (410 aa).

Helical transmembrane passes span 56-76 (MMILVWLALFPAMFYGMYNVG), 119-139 (LFGAIYFLPIYATVFIVGGFW), and 159-179 (SILFALIVPPTLPLWQAALGI). Threonine 232 is modified (FMN phosphoryl threonine). 5 consecutive transmembrane segments (helical) span residues 266–286 (GSIGEVSTLALLIGGAFIVFA), 293–313 (IIAGVMIGMIAMSSLFNFIGS), 318–338 (MFAMPWYWHLVVGGFAIGMLF), 347–367 (SFTNVGKWWYGALIGVMCVLI), and 377–397 (GMMLAILFANLFAPIFDYFVA).

It belongs to the NqrB/RnfD family. Composed of six subunits; NqrA, NqrB, NqrC, NqrD, NqrE and NqrF. Requires FMN as cofactor.

It is found in the cell inner membrane. The catalysed reaction is a ubiquinone + n Na(+)(in) + NADH + H(+) = a ubiquinol + n Na(+)(out) + NAD(+). In terms of biological role, NQR complex catalyzes the reduction of ubiquinone-1 to ubiquinol by two successive reactions, coupled with the transport of Na(+) ions from the cytoplasm to the periplasm. NqrA to NqrE are probably involved in the second step, the conversion of ubisemiquinone to ubiquinol. The polypeptide is Na(+)-translocating NADH-quinone reductase subunit B (Neisseria meningitidis serogroup A / serotype 4A (strain DSM 15465 / Z2491)).